The following is a 273-amino-acid chain: Proteasome subunit beta type-7-A (273 aa).

Positions 1-37 (MSQSTVDVPPKGGFSFDLCKRNDMLTQKGLKAPSFLK) are cleaved as a propeptide — removed in mature form. The Nucleophile role is filled by threonine 40.

It belongs to the peptidase T1B family. Component of the 20S core complex of the 26S proteasome. The 26S proteasome is composed of a core protease (CP), known as the 20S proteasome, capped at one or both ends by the 19S regulatory particle (RP/PA700). The 20S proteasome core is composed of 28 subunits that are arranged in four stacked rings, resulting in a barrel-shaped structure. The two end rings are each formed by seven alpha subunits, and the two central rings are each formed by seven beta subunits. The catalytic chamber with the active sites is on the inside of the barrel.

It is found in the cytoplasm. It localises to the nucleus. The enzyme catalyses Cleavage of peptide bonds with very broad specificity.. The proteasome is a multicatalytic proteinase complex which is characterized by its ability to cleave peptides with Arg, Phe, Tyr, Leu, and Glu adjacent to the leaving group at neutral or slightly basic pH. The proteasome has an ATP-dependent proteolytic activity. This is Proteasome subunit beta type-7-A (PBB1) from Arabidopsis thaliana (Mouse-ear cress).